We begin with the raw amino-acid sequence, 808 residues long: Zinc finger protein 148 (808 aa).

Disordered stretches follow at residues 15–86 (SPVG…ISQD) and 131–162 (DSLILNKKEKKPGRDPSDCHKKKKRKQRSPAK). Residues 56–73 (AEDDDDEDEEEDDDDDLA) are compositionally biased toward acidic residues. Residues 150–159 (HKKKKRKQRS) show a composition bias toward basic residues. C2H2-type zinc fingers lie at residues 180–202 (HICEHCNAAFRTNYHLQRHVFIH), 208–230 (FQCNQCDMRFIQKYLLQRHEKIH), 236–258 (FRCDECGMKFIQKYHMERHKRTH), and 264–287 (YQCDYCHQFFSRTDRVLKHRRMCH). 3 disordered regions span residues 305–338 (RTPENLGFSFPAKDCTLPKKKRQKTSDKSRASIT), 596–617 (SINSSDESSPAEALVTSSQAPP), and 705–736 (SFSGDETNPSSVSPTEDFLDQVTSPKKTDPQS). 2 stretches are compositionally biased toward polar residues: residues 705 to 718 (SFSGDETNPSSVSP) and 725 to 736 (QVTSPKKTDPQS).

This sequence belongs to the krueppel C2H2-type zinc-finger protein family.

The protein resides in the nucleus. Its function is as follows. Involved in transcriptional regulation. Represses the transcription of a number of genes. Required for primitive and definitive hematopoiesis during embryonic development. In Danio rerio (Zebrafish), this protein is Zinc finger protein 148 (znf148).